The chain runs to 193 residues: Holliday junction branch migration complex subunit RuvA (193 aa).

The interval 1–63 (MYAYLKGKIM…EDAQLLYGFK (63 aa)) is domain I. Positions 64 to 141 (DEEEKAMFNA…TITDESELFK (78 aa)) are domain II. The segment at 141-142 (KE) is flexible linker. Positions 143–193 (VNDTLLNEALLAFEALGYSKREITKIEKELKKKQFSTVDEYVKQGLQMFVS) are domain III.

Belongs to the RuvA family. In terms of assembly, homotetramer. Forms an RuvA(8)-RuvB(12)-Holliday junction (HJ) complex. HJ DNA is sandwiched between 2 RuvA tetramers; dsDNA enters through RuvA and exits via RuvB. An RuvB hexamer assembles on each DNA strand where it exits the tetramer. Each RuvB hexamer is contacted by two RuvA subunits (via domain III) on 2 adjacent RuvB subunits; this complex drives branch migration. In the full resolvosome a probable DNA-RuvA(4)-RuvB(12)-RuvC(2) complex forms which resolves the HJ.

The protein resides in the cytoplasm. In terms of biological role, the RuvA-RuvB-RuvC complex processes Holliday junction (HJ) DNA during genetic recombination and DNA repair, while the RuvA-RuvB complex plays an important role in the rescue of blocked DNA replication forks via replication fork reversal (RFR). RuvA specifically binds to HJ cruciform DNA, conferring on it an open structure. The RuvB hexamer acts as an ATP-dependent pump, pulling dsDNA into and through the RuvAB complex. HJ branch migration allows RuvC to scan DNA until it finds its consensus sequence, where it cleaves and resolves the cruciform DNA. This chain is Holliday junction branch migration complex subunit RuvA, found in Macrococcus caseolyticus (strain JCSC5402) (Macrococcoides caseolyticum).